A 68-amino-acid chain; its full sequence is DNA-directed RNA polymerase subunit omega (68 aa).

The protein belongs to the RNA polymerase subunit omega family. The RNAP catalytic core consists of 2 alpha, 1 beta, 1 beta' and 1 omega subunit. When a sigma factor is associated with the core the holoenzyme is formed, which can initiate transcription.

The enzyme catalyses RNA(n) + a ribonucleoside 5'-triphosphate = RNA(n+1) + diphosphate. Functionally, promotes RNA polymerase assembly. Latches the N- and C-terminal regions of the beta' subunit thereby facilitating its interaction with the beta and alpha subunits. In Nitrosospira multiformis (strain ATCC 25196 / NCIMB 11849 / C 71), this protein is DNA-directed RNA polymerase subunit omega.